A 225-amino-acid polypeptide reads, in one-letter code: Large ribosomal subunit protein bL25 (225 aa).

Residues 197 to 225 are disordered; sequence PQREEQMEDTDTAAADEEGDKEEDADKQE. The span at 202–225 shows a compositional bias: acidic residues; it reads QMEDTDTAAADEEGDKEEDADKQE.

It belongs to the bacterial ribosomal protein bL25 family. CTC subfamily. In terms of assembly, part of the 50S ribosomal subunit; part of the 5S rRNA/L5/L18/L25 subcomplex. Contacts the 5S rRNA. Binds to the 5S rRNA independently of L5 and L18.

This is one of the proteins that binds to the 5S RNA in the ribosome where it forms part of the central protuberance. The chain is Large ribosomal subunit protein bL25 from Dichelobacter nodosus (strain VCS1703A).